Consider the following 214-residue polypeptide: tRNA (guanine-N(7)-)-methyltransferase (214 aa).

S-adenosyl-L-methionine is bound by residues glutamate 43, glutamate 68, aspartate 95, and aspartate 117. Residue aspartate 117 is part of the active site. Substrate contacts are provided by residues lysine 121, aspartate 153, and 190–193 (TEYE).

It belongs to the class I-like SAM-binding methyltransferase superfamily. TrmB family.

The catalysed reaction is guanosine(46) in tRNA + S-adenosyl-L-methionine = N(7)-methylguanosine(46) in tRNA + S-adenosyl-L-homocysteine. It participates in tRNA modification; N(7)-methylguanine-tRNA biosynthesis. Catalyzes the formation of N(7)-methylguanine at position 46 (m7G46) in tRNA. This chain is tRNA (guanine-N(7)-)-methyltransferase, found in Staphylococcus aureus (strain Mu3 / ATCC 700698).